Consider the following 447-residue polypeptide: Tubulin beta chain (447 aa).

Residues Gln11, Glu69, Ser138, Gly142, Thr143, Gly144, Asn204, and Asn226 each coordinate GTP. Glu69 provides a ligand contact to Mg(2+). Residues 427–447 (DAGIDEEEEEYEEELPLEGEE) are disordered. The segment covering 429-447 (GIDEEEEEYEEELPLEGEE) has biased composition (acidic residues).

The protein belongs to the tubulin family. As to quaternary structure, dimer of alpha and beta chains. A typical microtubule is a hollow water-filled tube with an outer diameter of 25 nm and an inner diameter of 15 nM. Alpha-beta heterodimers associate head-to-tail to form protofilaments running lengthwise along the microtubule wall with the beta-tubulin subunit facing the microtubule plus end conferring a structural polarity. Microtubules usually have 13 protofilaments but different protofilament numbers can be found in some organisms and specialized cells. Mg(2+) serves as cofactor.

Its subcellular location is the cytoplasm. The protein localises to the cytoskeleton. Functionally, tubulin is the major constituent of microtubules, a cylinder consisting of laterally associated linear protofilaments composed of alpha- and beta-tubulin heterodimers. Microtubules grow by the addition of GTP-tubulin dimers to the microtubule end, where a stabilizing cap forms. Below the cap, tubulin dimers are in GDP-bound state, owing to GTPase activity of alpha-tubulin. The polypeptide is Tubulin beta chain (TUB2) (Hapsidospora chrysogena (Acremonium chrysogenum)).